Consider the following 378-residue polypeptide: 8-demethyl-8-alpha-L-rhamnosyl tetracenomycin-C 2'-O-methyltransferase (378 aa).

S-adenosyl-L-methionine is bound by residues 195 to 201 (EIGVGGY), Ser210, Asp227, 245 to 246 (DQ), and Asp268. Asp268 contacts Mg(2+). His271 serves as the catalytic Proton acceptor. Mg(2+)-binding residues include Glu296 and Asp297.

It belongs to the methyltransferase OleY/MycE family. It depends on Mg(2+) as a cofactor.

It catalyses the reaction 8-demethyl-8-alpha-L-rhamnosyl-tetracenomycin C + S-adenosyl-L-methionine = 8-demethyl-8-(2-O-methyl-alpha-L-rhamnosyl)-tetracenomycin C + S-adenosyl-L-homocysteine + H(+). It functions in the pathway antibiotic biosynthesis. Functionally, O-methyltransferase involved in the biosynthesis of the permethylated L-rhamnose moiety of elloramycin, an antitumor polyketide. Mediates the methylation of the hydroxy groups at the 2'-position after the sugar moiety has been attached to the aglycon. The sequence is that of 8-demethyl-8-alpha-L-rhamnosyl tetracenomycin-C 2'-O-methyltransferase from Streptomyces olivaceus.